Reading from the N-terminus, the 229-residue chain is Putative N-acetylmannosamine-6-phosphate 2-epimerase (229 aa).

The protein belongs to the NanE family.

It carries out the reaction an N-acyl-D-glucosamine 6-phosphate = an N-acyl-D-mannosamine 6-phosphate. It participates in amino-sugar metabolism; N-acetylneuraminate degradation; D-fructose 6-phosphate from N-acetylneuraminate: step 3/5. In terms of biological role, converts N-acetylmannosamine-6-phosphate (ManNAc-6-P) to N-acetylglucosamine-6-phosphate (GlcNAc-6-P). The polypeptide is Putative N-acetylmannosamine-6-phosphate 2-epimerase (Salmonella agona (strain SL483)).